The chain runs to 262 residues: Hydroxyethylthiazole kinase (262 aa).

Residue Met-50 coordinates substrate. Residues Arg-125 and Thr-171 each coordinate ATP. Gly-198 provides a ligand contact to substrate.

It belongs to the Thz kinase family. Mg(2+) serves as cofactor.

The catalysed reaction is 5-(2-hydroxyethyl)-4-methylthiazole + ATP = 4-methyl-5-(2-phosphooxyethyl)-thiazole + ADP + H(+). Its pathway is cofactor biosynthesis; thiamine diphosphate biosynthesis; 4-methyl-5-(2-phosphoethyl)-thiazole from 5-(2-hydroxyethyl)-4-methylthiazole: step 1/1. Its function is as follows. Catalyzes the phosphorylation of the hydroxyl group of 4-methyl-5-beta-hydroxyethylthiazole (THZ). This is Hydroxyethylthiazole kinase from Escherichia coli O6:K15:H31 (strain 536 / UPEC).